The following is a 152-amino-acid chain: Superoxide dismutase [Cu-Zn] 1 (152 aa).

Cu cation is bound by residues His45, His47, and His62. A disulfide bridge connects residues Cys56 and Cys145. Zn(2+) contacts are provided by His62, His70, His79, and Asp82. His119 contacts Cu cation.

It belongs to the Cu-Zn superoxide dismutase family. Homodimer. Cu cation is required as a cofactor. The cofactor is Zn(2+).

It is found in the cytoplasm. The enzyme catalyses 2 superoxide + 2 H(+) = H2O2 + O2. Its function is as follows. Destroys radicals which are normally produced within the cells and which are toxic to biological systems. This is Superoxide dismutase [Cu-Zn] 1 (SODCC.1) from Mesembryanthemum crystallinum (Common ice plant).